The following is a 264-amino-acid chain: NAD-capped RNA hydrolase NudC (264 aa).

Arg-70 contributes to the substrate binding site. Residues Cys-99 and Cys-102 each coordinate Zn(2+). Position 112 (Glu-112) interacts with substrate. Zn(2+) is bound by residues Cys-117 and Cys-122. Substrate is bound at residue Tyr-127. A Nudix hydrolase domain is found at 128-252 (PVICPCIIVA…TIALKLIEHT (125 aa)). Ala-161, Glu-177, and Glu-181 together coordinate a divalent metal cation. The Nudix box signature appears at 162–183 (GFVEVGETFEQAVHREVLEETG). 195 to 202 (QPWAFPNS) lines the substrate pocket. Residue Glu-222 participates in a divalent metal cation binding. Ala-245 is a substrate binding site.

It belongs to the Nudix hydrolase family. NudC subfamily. As to quaternary structure, homodimer. Requires Mg(2+) as cofactor. It depends on Mn(2+) as a cofactor. The cofactor is Zn(2+).

The catalysed reaction is a 5'-end NAD(+)-phospho-ribonucleoside in mRNA + H2O = a 5'-end phospho-adenosine-phospho-ribonucleoside in mRNA + beta-nicotinamide D-ribonucleotide + 2 H(+). The enzyme catalyses NAD(+) + H2O = beta-nicotinamide D-ribonucleotide + AMP + 2 H(+). It carries out the reaction NADH + H2O = reduced beta-nicotinamide D-ribonucleotide + AMP + 2 H(+). In terms of biological role, mRNA decapping enzyme that specifically removes the nicotinamide adenine dinucleotide (NAD) cap from a subset of mRNAs by hydrolyzing the diphosphate linkage to produce nicotinamide mononucleotide (NMN) and 5' monophosphate mRNA. The NAD-cap is present at the 5'-end of some mRNAs and stabilizes RNA against 5'-processing. Has preference for mRNAs with a 5'-end purine. Catalyzes the hydrolysis of a broad range of dinucleotide pyrophosphates. The chain is NAD-capped RNA hydrolase NudC from Pasteurella multocida (strain Pm70).